Consider the following 162-residue polypeptide: Phospholipase A and acyltransferase 3 (162 aa).

Residues Met1–Val133 lie on the Cytoplasmic side of the membrane. The 117-residue stretch at Leu13–Gln129 folds into the LRAT domain. Residues His23 and His35 contribute to the active site. Catalysis depends on Cys113, which acts as the Acyl-thioester intermediate. A helical membrane pass occupies residues Ile134 to Phe154. At Ser155 to Gln162 the chain is on the lumenal side.

Belongs to the H-rev107 family. In terms of assembly, interacts with PPP2R1A; this interaction might decrease PP2A activity.

It localises to the cell membrane. Its subcellular location is the cytoplasm. The protein resides in the cytosol. The protein localises to the perinuclear region. It is found in the peroxisome membrane. It localises to the mitochondrion membrane. Its subcellular location is the nucleus envelope. The protein resides in the lysosome membrane. The protein localises to the endoplasmic reticulum membrane. It carries out the reaction a 1,2-diacyl-sn-glycero-3-phosphocholine + H2O = a 1-acyl-sn-glycero-3-phosphocholine + a fatty acid + H(+). The enzyme catalyses a 1,2-diacyl-sn-glycero-3-phosphocholine + H2O = a 2-acyl-sn-glycero-3-phosphocholine + a fatty acid + H(+). It catalyses the reaction 1,2-dihexadecanoyl-sn-glycero-3-phosphocholine + H2O = 1-hexadecanoyl-sn-glycero-3-phosphocholine + hexadecanoate + H(+). The catalysed reaction is 1,2-dihexadecanoyl-sn-glycero-3-phosphocholine + H2O = 2-hexadecanoyl-sn-glycero-3-phosphocholine + hexadecanoate + H(+). It carries out the reaction 1-hexadecanoyl-2-(9Z-octadecenoyl)-sn-glycero-3-phosphocholine + H2O = 2-(9Z-octadecenoyl)-sn-glycero-3-phosphocholine + hexadecanoate + H(+). The enzyme catalyses 1-hexadecanoyl-2-(9Z-octadecenoyl)-sn-glycero-3-phosphocholine + H2O = 1-hexadecanoyl-sn-glycero-3-phosphocholine + (9Z)-octadecenoate + H(+). It catalyses the reaction 1-hexadecanoyl-2-(5Z,8Z,11Z,14Z-eicosatetraenoyl)-sn-glycero-3-phosphocholine + H2O = 1-hexadecanoyl-sn-glycero-3-phosphocholine + (5Z,8Z,11Z,14Z)-eicosatetraenoate + H(+). The catalysed reaction is 1-hexadecanoyl-2-(5Z,8Z,11Z,14Z-eicosatetraenoyl)-sn-glycero-3-phosphocholine + H2O = 2-(5Z,8Z,11Z,14Z)-eicosatetraenoyl-sn-glycero-3-phosphocholine + hexadecanoate + H(+). It carries out the reaction 1-hexadecanoyl-2-(9Z,12Z-octadecadienoyl)-sn-glycero-3-phosphoethanolamine + H2O = 1-hexadecanoyl-sn-glycero-3-phosphoethanolamine + (9Z,12Z)-octadecadienoate + H(+). The enzyme catalyses 1-hexadecanoyl-2-(9Z,12Z-octadecadienoyl)-sn-glycero-3-phosphoethanolamine + H2O = 2-(9Z,12Z)-octadecadienoyl-sn-glycero-3-phosphoethanolamine + hexadecanoate + H(+). It catalyses the reaction 1-hexadecanoyl-2-(5Z,8Z,11Z,14Z-eicosatetraenoyl)-sn-glycero-3-phosphoethanolamine + H2O = 1-hexadecanoyl-sn-glycero-3-phosphoethanolamine + (5Z,8Z,11Z,14Z)-eicosatetraenoate + H(+). The catalysed reaction is 1-hexadecanoyl-2-(5Z,8Z,11Z,14Z-eicosatetraenoyl)-sn-glycero-3-phosphoethanolamine + H2O = 2-(5Z,8Z,11Z,14Z)-eicosatetraenoyl-sn-glycero-3-phosphoethanolamine + hexadecanoate + H(+). It carries out the reaction 1-hexanoyl-2-acyl-sn-glycero-3-phosphocholine + H2O = hexanoate + a 2-acyl-sn-glycero-3-phosphocholine + H(+). The enzyme catalyses 1-hexanoyl-2-acyl-sn-glycero-3-phosphocholine + H2O = 1-hexanoyl-sn-glycero-3-phosphocholine + a fatty acid + H(+). It catalyses the reaction 1,2-diheptadecanoyl-sn-glycero-3-phosphoethanolamine + 1-(9Z-octadecenoyl)-2-hexadecanoyl-sn-glycero-3-phosphocholine = 1,2-diheptadecanoyl-sn-glycero-3-phospho-N-hexadecanoyl-ethanolamine + 1-(9Z-octadecenoyl)-sn-glycero-3-phosphocholine + H(+). The catalysed reaction is 1,2-diheptadecanoyl-sn-glycero-3-phosphoethanolamine + 1-(9Z-octadecenoyl)-2-hexadecanoyl-sn-glycero-3-phosphocholine = 1,2-diheptadecanoyl-sn-glycero-3-phospho-N-(9Z-octadecenoyl)-ethanolamine + 2-hexadecanoyl-sn-glycero-3-phosphocholine + H(+). It carries out the reaction 1,2-dihexanoyl-sn-glycero-3-phosphoethanolamine + 2-heptanoyl-sn-glycero-3-phosphocholine = hexanoyl-sn-glycero-3-phosphoethanolamine + 1-hexanoyl-2-heptanoyl-sn-glycero-3-phosphocholine. The enzyme catalyses 1-hexadecanoyl-2-octadecanoyl-sn-glycero-3-phosphocholine + H2O = octadecanoate + 1-hexadecanoyl-sn-glycero-3-phosphocholine + H(+). It catalyses the reaction 1-hexadecanoyl-2-octadecanoyl-sn-glycero-3-phosphocholine + H2O = 2-octadecanoyl-sn-glycero-3-phosphocholine + hexadecanoate + H(+). The catalysed reaction is 1-octadecanoyl-2-hexadecanoyl-sn-glycero-3-phosphocholine + H2O = 1-octadecanoyl-sn-glycero-3-phosphocholine + hexadecanoate + H(+). It carries out the reaction 1-octadecanoyl-2-hexadecanoyl-sn-glycero-3-phosphocholine + H2O = 2-hexadecanoyl-sn-glycero-3-phosphocholine + octadecanoate + H(+). The enzyme catalyses 1-hexadecanoyl-2-(9Z,12Z-octadecadienoyl)-sn-glycero-3-phosphocholine + H2O = (9Z,12Z)-octadecadienoate + 1-hexadecanoyl-sn-glycero-3-phosphocholine + H(+). It catalyses the reaction 1-hexadecanoyl-2-(9Z,12Z-octadecadienoyl)-sn-glycero-3-phosphocholine + H2O = 2-(9Z,12Z-octadecadienoyl)-sn-glycero-3-phosphocholine + hexadecanoate + H(+). The catalysed reaction is 1,2-di-(9Z-octadecenoyl)-sn-glycero-3-phosphocholine + H2O = 2-(9Z-octadecenoyl)-sn-glycero-3-phosphocholine + (9Z)-octadecenoate + H(+). It carries out the reaction 1,2-dihexadecanoyl-sn-glycero-3-phosphocholine + H2O = hexadecanoyl-sn-glycero-3-phosphocholine + hexadecanoate + H(+). The enzyme catalyses 1,2-di-(9Z-octadecenoyl)-sn-glycero-3-phosphocholine + H2O = 1-(9Z-octadecenoyl)-sn-glycero-3-phosphocholine + (9Z)-octadecenoate + H(+). It catalyses the reaction 1,2-di-(9Z-octadecenoyl)-sn-glycero-3-phosphoethanolamine + 1,2-dihexadecanoyl-sn-glycero-3-phosphocholine = hexadecanoyl-sn-glycero-3-phosphocholine + N-hexadecanoyl-1,2-di-(9Z-octadecenoyl)-sn-glycero-3-phosphoethanolamine + H(+). The catalysed reaction is 1,2-di-(9Z,12Z-octadecadienoyl)-sn-glycero-3-phosphocholine + H2O = 1-(9Z,12Z)-octadecadienoyl-sn-glycero-3-phosphocholine + (9Z,12Z)-octadecadienoate + H(+). Its function is as follows. Exhibits both phospholipase A1/2 and acyltransferase activities. Shows phospholipase A1 (PLA1) and A2 (PLA2), catalyzing the calcium-independent release of fatty acids from the sn-1 or sn-2 position of glycerophospholipids. For most substrates, PLA1 activity is much higher than PLA2 activity. Shows O-acyltransferase activity, catalyzing the transfer of a fatty acyl group from glycerophospholipid to the hydroxyl group of lysophospholipid. Shows N-acyltransferase activity, catalyzing the calcium-independent transfer of a fatty acyl group at the sn-1 position of phosphatidylcholine (PC) and other glycerophospholipids to the primary amine of phosphatidylethanolamine (PE), forming N-acylphosphatidylethanolamine (NAPE), which serves as precursor for N-acylethanolamines (NAEs). Exhibits high N-acyltransferase activity and low phospholipase A1/2 activity. Required for complete organelle rupture and degradation that occur during eye lens terminal differentiation, when fiber cells that compose the lens degrade all membrane-bound organelles in order to provide lens with transparency to allow the passage of light. Organelle membrane degradation is probably catalyzed by the phospholipase activity. Plays a role in phospholipid metabolism and adipogenesis. The protein is Phospholipase A and acyltransferase 3 of Pongo abelii (Sumatran orangutan).